A 190-amino-acid chain; its full sequence is Putative hydrolase YdeN (190 aa).

Active-site charge relay system residues include Ser71, Asp137, and His164.

This sequence belongs to the RBBP9 family.

This Bacillus subtilis (strain 168) protein is Putative hydrolase YdeN (ydeN).